The primary structure comprises 128 residues: MDTVKNYLSVAFFAFWGGLARYGLTEAFSFYGTVIANLLGCFLLAFLTYFFLRKSNSRAWLTTGLGTGFVGAFTTFSSFNLDAFKLLLGGQNFGALLYFTGTIAAGFLFAWAGKQAANFAAGKLLERG.

A run of 4 helical transmembrane segments spans residues 10 to 30 (VAFF…AFSF), 32 to 52 (GTVI…YFFL), 59 to 79 (AWLT…FSSF), and 93 to 113 (FGAL…AWAG). Positions 71 and 74 each coordinate Na(+).

Belongs to the fluoride channel Fluc/FEX (TC 1.A.43) family.

The protein localises to the cell membrane. It catalyses the reaction fluoride(in) = fluoride(out). Na(+) is not transported, but it plays an essential structural role and its presence is essential for fluoride channel function. Its function is as follows. Fluoride-specific ion channel. Important for reducing fluoride concentration in the cell, thus reducing its toxicity. The polypeptide is Fluoride-specific ion channel FluC 1 (Lactobacillus delbrueckii subsp. bulgaricus (strain ATCC 11842 / DSM 20081 / BCRC 10696 / JCM 1002 / NBRC 13953 / NCIMB 11778 / NCTC 12712 / WDCM 00102 / Lb 14)).